Here is a 151-residue protein sequence, read N- to C-terminus: Monooxygenase nsrQ (151 aa).

This sequence belongs to the avfA family.

Its pathway is secondary metabolite biosynthesis. Its function is as follows. Monooxygenase; part of the gene cluster that mediates the biosynthesis of the tetrahydroxanthone dimer neosartorin, which exhibits antibacterial activity. The two different monomeric units appear to be synthesized by the same set of enzymes, among which the Baeyer-Villiger monooxygenase nsrF is the key enzyme for the divergence of the biosynthetic routes. The pathway begins with the synthesis of atrochrysone thioester by the polyketide synthase nsrB. The atrochrysone carboxyl ACP thioesterase nsrC then breaks the thioester bond and releases the atrochrysone carboxylic acid from AacuL. Atrochrysone carboxylic acid is decarboxylated by the decarboxylase nsrE, and oxidized by the anthrone oxygenase nsrD to yield emodin. Emodin is then reduced to emodin hydroquinone by the oxidoreductase nsrR. A-ring reduction by the short chain dehydrogenase nsrJ, dehydration by the scytalone dehydratase-like protein nsrI and probable spontaneous re-oxidation, results in overall deoxygenation to chrysophanol. The Baeyer-Villiger monooxygenase nsrF accepts chrysophanol as a substrate to insert one oxygen atom at two different positions to yield the precursors of both monomric units. NsrF is promiscuous/flexible in interacting with the 2 (non methylated and methylated) aromatic rings of chrysophanol, thus diverging the biosynthetic pathway at this point. After the hydrolysis of the lactones, methylesterification by the methyltransferase nsrG yields respectively moniliphenone and 2,2',6'-trihydroxy-4-methyl-6-methoxya-cyldiphenylmethanone. The next steps are the hydroxylation by the FAD-dependent monooxygenase nsrK, followed by isomerization by the monooxygenase nsrQ. The short chain dehydrogenase/reductase nsrO then catalyzes the C-5 ketoreduction to give the xanthone skeleton of blennolide C and 5-acetylblennolide A. The acetyltransferase nsrL has a strict substrate specificity and uses only blennolide A but not blennolide C to yield 5-acetylblennolide A as the single-acetylated product. In the final step of the biosynthesis, the heterodimerization of the 2 xanthones, blennolide C and 5-acetylblennolide A, is catalyzed by the cytochrome P450 monooxygenase nsrP. NsrP can utilize at least three different xanthones as its substrates to perform the dimerization reaction. The chain is Monooxygenase nsrQ from Aspergillus novofumigatus (strain IBT 16806).